The primary structure comprises 87 residues: Large ribosomal subunit protein bL31B (87 aa).

This sequence belongs to the bacterial ribosomal protein bL31 family. Type B subfamily. In terms of assembly, part of the 50S ribosomal subunit.

This Klebsiella pneumoniae (strain 342) protein is Large ribosomal subunit protein bL31B.